A 320-amino-acid polypeptide reads, in one-letter code: Zygote arrest protein 1 (320 aa).

2 disordered regions span residues 106–130 (ELRRRRKLNPGPPGTPQKTEGEVRY) and 155–208 (DRPA…AEGS). A 3CxxC-type zinc finger spans residues 222 to 305 (KYGYYHCREC…RQDLCGRCKG (84 aa)).

Belongs to the ZAR1 family.

The protein localises to the cytoplasm. It is found in the cytoplasmic ribonucleoprotein granule. In terms of biological role, mRNA-binding protein required for maternal mRNA storage, translation and degradation during oocyte maturation. Probably promotes formation of some phase-separated membraneless compartment that stores maternal mRNAs in oocytes: acts by undergoing liquid-liquid phase separation upon binding to maternal mRNAs. Binds to the 3'-UTR of maternal mRNAs, inhibiting their translation. The polypeptide is Zygote arrest protein 1 (Takifugu rubripes (Japanese pufferfish)).